The sequence spans 368 residues: Phosphoribosylformylglycinamidine cyclo-ligase (368 aa).

Belongs to the AIR synthase family.

The protein localises to the cytoplasm. It catalyses the reaction 2-formamido-N(1)-(5-O-phospho-beta-D-ribosyl)acetamidine + ATP = 5-amino-1-(5-phospho-beta-D-ribosyl)imidazole + ADP + phosphate + H(+). The protein operates within purine metabolism; IMP biosynthesis via de novo pathway; 5-amino-1-(5-phospho-D-ribosyl)imidazole from N(2)-formyl-N(1)-(5-phospho-D-ribosyl)glycinamide: step 2/2. The protein is Phosphoribosylformylglycinamidine cyclo-ligase of Chelativorans sp. (strain BNC1).